A 338-amino-acid chain; its full sequence is 1-aminocyclopropane-1-carboxylate deaminase (338 aa).

The residue at position 51 (K51) is an N6-(pyridoxal phosphate)lysine. S78 acts as the Nucleophile in catalysis.

This sequence belongs to the ACC deaminase/D-cysteine desulfhydrase family. Homotrimer. Requires pyridoxal 5'-phosphate as cofactor.

The catalysed reaction is 1-aminocyclopropane-1-carboxylate + H2O = 2-oxobutanoate + NH4(+). Functionally, catalyzes a cyclopropane ring-opening reaction, the irreversible conversion of 1-aminocyclopropane-1-carboxylate (ACC) to ammonia and alpha-ketobutyrate. Allows growth on ACC as a nitrogen source. The polypeptide is 1-aminocyclopropane-1-carboxylate deaminase (Burkholderia thailandensis (strain ATCC 700388 / DSM 13276 / CCUG 48851 / CIP 106301 / E264)).